The sequence spans 55 residues: Antiviral protein GAP-31 (55 aa).

The disordered stretch occupies residues 29 to 55; sequence KPEGNSHGIPSLRKSSDDPGSSFVVAG.

This sequence belongs to the ribosome-inactivating protein family. Type 1 RIP subfamily.

It carries out the reaction Endohydrolysis of the N-glycosidic bond at one specific adenosine on the 28S rRNA.. Functionally, single-chain ribosome-inactivating protein, possessing high antiviral potency and low toxicity to normal cells in culture and to intact animals. Capable of inhibiting HIV-1 infection and replication. The sequence is that of Antiviral protein GAP-31 from Suregada multiflora (False lime).